The following is a 543-amino-acid chain: Plant intracellular Ras-group-related LRR protein 5 (543 aa).

10 LRR repeats span residues 239 to 262, 264 to 284, 285 to 307, 309 to 331, 332 to 354, 356 to 377, 378 to 400, 402 to 424, 426 to 448, and 449 to 470; these read LQDV…IGSL, YLTK…AFGE, LSNL…SFGN, TSLA…LGKL, ANLR…IGSC, SLVE…IGKL, EKLE…VGSL, RLRE…CFAT, LVKL…IGNL, and EMLE…SFRC. The LRR 11; degenerate repeat unit spans residues 472-494; it reads SRLRVFHADETPLEFPPREVVKL. The GVYW; degenerate motif lies at 495-502; it reads GAQAVVKY.

The protein belongs to the SHOC2 family. As to expression, widely expressed.

Leucine-rich repeat protein that likely mediates protein interactions, possibly in the context of signal transduction. The polypeptide is Plant intracellular Ras-group-related LRR protein 5 (IRL5) (Oryza sativa subsp. japonica (Rice)).